The sequence spans 125 residues: Fluoride-specific ion channel FluC (125 aa).

4 helical membrane-spanning segments follow: residues 2 to 22 (WLSI…RTGF), 35 to 55 (LGTL…LAFF), 68 to 88 (LIIT…AEVV), and 98 to 118 (WALG…LLGI). Positions 75 and 78 each coordinate Na(+).

It belongs to the fluoride channel Fluc/FEX (TC 1.A.43) family.

The protein resides in the cell inner membrane. The catalysed reaction is fluoride(in) = fluoride(out). With respect to regulation, na(+) is not transported, but it plays an essential structural role and its presence is essential for fluoride channel function. In terms of biological role, fluoride-specific ion channel. Important for reducing fluoride concentration in the cell, thus reducing its toxicity. The polypeptide is Fluoride-specific ion channel FluC (Polynucleobacter asymbioticus (strain DSM 18221 / CIP 109841 / QLW-P1DMWA-1) (Polynucleobacter necessarius subsp. asymbioticus)).